Reading from the N-terminus, the 631-residue chain is Phosphomethylpyrimidine synthase (631 aa).

Residues N239, M268, Y297, H333, 353 to 355 (SRG), 394 to 397 (DGLR), and E433 each bind substrate. H437 contacts Zn(2+). Residue Y460 participates in substrate binding. Zn(2+) is bound at residue H501. [4Fe-4S] cluster is bound by residues C581, C584, and C589.

The protein belongs to the ThiC family. As to quaternary structure, homodimer. It depends on [4Fe-4S] cluster as a cofactor.

The catalysed reaction is 5-amino-1-(5-phospho-beta-D-ribosyl)imidazole + S-adenosyl-L-methionine = 4-amino-2-methyl-5-(phosphooxymethyl)pyrimidine + CO + 5'-deoxyadenosine + formate + L-methionine + 3 H(+). The protein operates within cofactor biosynthesis; thiamine diphosphate biosynthesis. Its function is as follows. Catalyzes the synthesis of the hydroxymethylpyrimidine phosphate (HMP-P) moiety of thiamine from aminoimidazole ribotide (AIR) in a radical S-adenosyl-L-methionine (SAM)-dependent reaction. The polypeptide is Phosphomethylpyrimidine synthase (Salmonella dublin (strain CT_02021853)).